A 1165-amino-acid chain; its full sequence is MICQKFCVVLLHWEFIYVITAFNLSYPITPWRFKLSCMPPNSTYDYFLLPAGLSKNTSNSNGHYETAVEPKFNSSGTHFSNLSKTTFHCCFRSEQDRNCSLCADNIEGKTFVSTVNSLVFQQIDANWNIQCWLKGDLKLFICYVESLFKNLFRNYNYKVHLLYVLPEVLEDSPLVPQKGSFQMVHCNCSVHECCECLVPVPTAKLNDTLLMCLKITSGGVIFQSPLMSVQPINMVKPDPPLGLHMEITDDGNLKISWSSPPLVPFPLQYQVKYSENSTTVIREADKIVSATSLLVDSILPGSSYEVQVRGKRLDGPGIWSDWSTPRVFTTQDVIYFPPKILTSVGSNVSFHCIYKKENKIVPSKEIVWWMNLAEKIPQSQYDVVSDHVSKVTFFNLNETKPRGKFTYDAVYCCNEHECHHRYAELYVIDVNINISCETDGYLTKMTCRWSTSTIQSLAESTLQLRYHRSSLYCSDIPSIHPISEPKDCYLQSDGFYECIFQPIFLLSGYTMWIRINHSLGSLDSPPTCVLPDSVVKPLPPSSVKAEITINIGLLKISWEKPVFPENNLQFQIRYGLSGKEVQWKMYEVYDAKSKSVSLPVPDLCAVYAVQVRCKRLDGLGYWSNWSNPAYTVVMDIKVPMRGPEFWRIINGDTMKKEKNVTLLWKPLMKNDSLCSVQRYVINHHTSCNGTWSEDVGNHTKFTFLWTEQAHTVTVLAINSIGASVANFNLTFSWPMSKVNIVQSLSAYPLNSSCVIVSWILSPSDYKLMYFIIEWKNLNEDGEIKWLRISSSVKKYYIHDHFIPIEKYQFSLYPIFMEGVGKPKIINSFTQDDIEKHQSDAGLYVIVPVIISSSILLLGTLLISHQRMKKLFWEDVPNPKNCSWAQGLNFQKPETFEHLFIKHTASVTCGPLLLEPETISEDISVDTSWKNKDEMMPTTVVSLLSTTDLEKGSVCISDQFNSVNFSEAEGTEVTYEDESQRQPFVKYATLISNSKPSETGEEQGLINSSVTKCFSSKNSPLKDSFSNSSWEIEAQAFFILSDQHPNIISPHLTFSEGLDELLKLEGNFPEENNDKKSIYYLGVTSIKKRESGVLLTDKSRVSCPFPAPCLFTDIRVLQDSCSHFVENNINLGTSSKKTFASYMPQFQTCSTQTHKIMENKMCDLTV.

The first 21 residues, 1–21 (MICQKFCVVLLHWEFIYVITA), serve as a signal peptide directing secretion. The Extracellular segment spans residues 22–839 (FNLSYPITPW…QDDIEKHQSD (818 aa)). Residues N23, N41, N56, N73, N81, and N98 are each glycosylated (N-linked (GlcNAc...) asparagine). 5 disulfides stabilise this stretch: C37–C90, C89–C99, C131–C142, C186–C196, and C188–C193. N-linked (GlcNAc...) asparagine glycosylation occurs at N187. N206, N276, N347, and N397 each carry an N-linked (GlcNAc...) asparagine glycan. In terms of domain architecture, Fibronectin type-III 1 spans 239–333 (PPLGLHMEIT…TPRVFTTQDV (95 aa)). The 99-residue stretch at 331–429 (QDVIYFPPKI…HRYAELYVID (99 aa)) folds into the Ig-like domain. Disulfide bonds link C352–C412, C413–C418, C436–C447, C473–C528, and C488–C498. The leptin-binding stretch occupies residues 467-484 (HRSSLYCSDIPSIHPISE). Residues N516, N624, N659, N688, N697, N728, and N750 are each glycosylated (N-linked (GlcNAc...) asparagine). Fibronectin type-III domains lie at 539–634 (PPSS…TVVM), 639–732 (PMRG…LTFS), and 740–833 (IVQS…QDDI). The WSXWS motif motif lies at 622 to 626 (WSNWS). A helical transmembrane segment spans residues 840-862 (AGLYVIVPVIISSSILLLGTLLI). Over 863–1165 (SHQRMKKLFW…MENKMCDLTV (303 aa)) the chain is Cytoplasmic. The Box 1 motif signature appears at 871-879 (FWEDVPNPK). Phosphoserine is present on S882. Residues 893-898 (ETFEHL) form a required for JAK2 activation region. The tract at residues 898-906 (LFIKHTASV) is required for STAT3 phosphorylation. Y986 is subject to Phosphotyrosine; by JAK2. The residue at position 1079 (Y1079) is a Phosphotyrosine. At Y1141 the chain carries Phosphotyrosine; by JAK2.

Belongs to the type I cytokine receptor family. Type 2 subfamily. Present as a mixture of monomers and dimers. The phosphorylated receptor binds a number of SH2 domain-containing proteins such as JAK2, STAT3, PTPN11, and SOCS3. Interaction with SOCS3 inhibits JAK/STAT signaling and MAPK cascade. On ligand binding, phosphorylated on two conserved C-terminal tyrosine residues (isoform B only) by JAK2. Tyr-986 is required for complete binding and activation of PTPN11, ERK/FOS activation,for interaction with SOCS3 and SOCS3 mediated inhibition of leptin signaling. Phosphorylation on Tyr-1141 is required for STAT3 binding/activation. Phosphorylation of Tyr-1079 has a more accessory role. In terms of tissue distribution, isoform A is expressed in fetal liver and in hematopoietic tissues and choroid plexus. In adults highest expression in heart, liver, small intestine, prostate and ovary. Low level in lung and kidney. Isoform B is highly expressed in hypothalamus, but also in skeletal muscle. Detected in fundic and antral epithelial cells of the gastric mucosa. Isoform B and isoform A are expressed by NK cells (at protein level).

It is found in the cell membrane. Its subcellular location is the basolateral cell membrane. The protein localises to the secreted. Functionally, receptor for hormone LEP/leptin. On ligand binding, mediates LEP central and peripheral effects through the activation of different signaling pathways such as JAK2/STAT3 and MAPK cascade/FOS. In the hypothalamus, LEP acts as an appetite-regulating factor that induces a decrease in food intake and an increase in energy consumption by inducing anorexinogenic factors and suppressing orexigenic neuropeptides, also regulates bone mass and secretion of hypothalamo-pituitary-adrenal hormones. In the periphery, increases basal metabolism, influences reproductive function, regulates pancreatic beta-cell function and insulin secretion, is pro-angiogenic and affects innate and adaptive immunity. Control of energy homeostasis and melanocortin production (stimulation of POMC and full repression of AgRP transcription) is mediated by STAT3 signaling, whereas distinct signals regulate NPY and the control of fertility, growth and glucose homeostasis. Involved in the regulation of counter-regulatory response to hypoglycemia by inhibiting neurons of the parabrachial nucleus. Has a specific effect on T lymphocyte responses, differentially regulating the proliferation of naive and memory T -ells. Leptin increases Th1 and suppresses Th2 cytokine production. Its function is as follows. May transport LEP across the blood-brain barrier. Binds LEP and mediates LEP endocytosis. Does not induce phosphorylation of and activate STAT3. Antagonizes Isoform A and isoform B-mediated LEP binding and endocytosis. The protein is Leptin receptor (LEPR) of Homo sapiens (Human).